Consider the following 367-residue polypeptide: Histidinol-phosphate aminotransferase (367 aa).

At Lys-226 the chain carries N6-(pyridoxal phosphate)lysine.

It belongs to the class-II pyridoxal-phosphate-dependent aminotransferase family. Histidinol-phosphate aminotransferase subfamily. In terms of assembly, homodimer. It depends on pyridoxal 5'-phosphate as a cofactor.

It carries out the reaction L-histidinol phosphate + 2-oxoglutarate = 3-(imidazol-4-yl)-2-oxopropyl phosphate + L-glutamate. It functions in the pathway amino-acid biosynthesis; L-histidine biosynthesis; L-histidine from 5-phospho-alpha-D-ribose 1-diphosphate: step 7/9. The sequence is that of Histidinol-phosphate aminotransferase from Aliarcobacter butzleri (strain RM4018) (Arcobacter butzleri).